A 477-amino-acid polypeptide reads, in one-letter code: Asparaginyl-tRNA synthetase (477 aa).

Residues 1 to 14 (MLGARRLLGALRLC) constitute a mitochondrion transit peptide. An N6-acetyllysine modification is found at Lys353.

This sequence belongs to the class-II aminoacyl-tRNA synthetase family. Homodimer. As to expression, expressed in brain and inner ear, including the cochlear epithelium and organ of Corti.

The protein localises to the mitochondrion matrix. Its subcellular location is the mitochondrion. It carries out the reaction tRNA(Asn) + L-asparagine + ATP = L-asparaginyl-tRNA(Asn) + AMP + diphosphate + H(+). Functionally, mitochondrial aminoacyl-tRNA synthetase that catalyzes the specific attachment of the asparagine amino acid (aa) to the homologous transfer RNA (tRNA), further participating in protein synthesis. The reaction occurs in a two steps: asparagine is first activated by ATP to form Asn-AMP and then transferred to the acceptor end of tRNA(Asn). This Mus musculus (Mouse) protein is Asparaginyl-tRNA synthetase.